Here is a 544-residue protein sequence, read N- to C-terminus: Glucans biosynthesis protein G 1 (544 aa).

A signal peptide spans Met-1–Ala-33. The tract at residues Ser-36–Ala-58 is disordered.

Belongs to the OpgD/OpgG family.

The protein localises to the periplasm. The protein operates within glycan metabolism; osmoregulated periplasmic glucan (OPG) biosynthesis. Its function is as follows. Involved in the biosynthesis of osmoregulated periplasmic glucans (OPGs). The chain is Glucans biosynthesis protein G 1 (opgG1) from Shewanella oneidensis (strain ATCC 700550 / JCM 31522 / CIP 106686 / LMG 19005 / NCIMB 14063 / MR-1).